A 323-amino-acid chain; its full sequence is Mycothiol acetyltransferase (323 aa).

Glu44 contributes to the 1D-myo-inositol 2-(L-cysteinylamino)-2-deoxy-alpha-D-glucopyranoside binding site. 2 N-acetyltransferase domains span residues 77-176 (GQDL…VSLR) and 173-323 (VSLR…VKEG). 98-100 (IAV) contributes to the acetyl-CoA binding site. Residues Glu200, Lys240, and Glu253 each coordinate 1D-myo-inositol 2-(L-cysteinylamino)-2-deoxy-alpha-D-glucopyranoside. Acetyl-CoA contacts are provided by residues 257-259 (VGV) and 264-270 (QGSGLGK). Tyr291 serves as a coordination point for 1D-myo-inositol 2-(L-cysteinylamino)-2-deoxy-alpha-D-glucopyranoside.

This sequence belongs to the acetyltransferase family. MshD subfamily. As to quaternary structure, monomer.

It catalyses the reaction 1D-myo-inositol 2-(L-cysteinylamino)-2-deoxy-alpha-D-glucopyranoside + acetyl-CoA = mycothiol + CoA + H(+). Functionally, catalyzes the transfer of acetyl from acetyl-CoA to desacetylmycothiol (Cys-GlcN-Ins) to form mycothiol. This is Mycothiol acetyltransferase from Pseudarthrobacter chlorophenolicus (strain ATCC 700700 / DSM 12829 / CIP 107037 / JCM 12360 / KCTC 9906 / NCIMB 13794 / A6) (Arthrobacter chlorophenolicus).